We begin with the raw amino-acid sequence, 152 residues long: D-aminoacyl-tRNA deacylase (152 aa).

Residues 142–143 (GP) carry the Gly-cisPro motif, important for rejection of L-amino acids motif.

It belongs to the DTD family. As to quaternary structure, homodimer.

The protein localises to the cytoplasm. It catalyses the reaction glycyl-tRNA(Ala) + H2O = tRNA(Ala) + glycine + H(+). The catalysed reaction is a D-aminoacyl-tRNA + H2O = a tRNA + a D-alpha-amino acid + H(+). Functionally, an aminoacyl-tRNA editing enzyme that deacylates mischarged D-aminoacyl-tRNAs. Also deacylates mischarged glycyl-tRNA(Ala), protecting cells against glycine mischarging by AlaRS. Acts via tRNA-based rather than protein-based catalysis; rejects L-amino acids rather than detecting D-amino acids in the active site. By recycling D-aminoacyl-tRNA to D-amino acids and free tRNA molecules, this enzyme counteracts the toxicity associated with the formation of D-aminoacyl-tRNA entities in vivo and helps enforce protein L-homochirality. This is D-aminoacyl-tRNA deacylase from Paraburkholderia phymatum (strain DSM 17167 / CIP 108236 / LMG 21445 / STM815) (Burkholderia phymatum).